A 314-amino-acid chain; its full sequence is DNA-directed RNA polymerase subunit alpha (314 aa).

Positions 1-227 (MLEIEKPKIE…DYLKLFVALT (227 aa)) are alpha N-terminal domain (alpha-NTD). Residues 244–314 (QDKILEMTIE…LGLSLRKSED (71 aa)) are alpha C-terminal domain (alpha-CTD).

Belongs to the RNA polymerase alpha chain family. As to quaternary structure, homodimer. The RNAP catalytic core consists of 2 alpha, 1 beta, 1 beta' and 1 omega subunit. When a sigma factor is associated with the core the holoenzyme is formed, which can initiate transcription.

It carries out the reaction RNA(n) + a ribonucleoside 5'-triphosphate = RNA(n+1) + diphosphate. Functionally, DNA-dependent RNA polymerase catalyzes the transcription of DNA into RNA using the four ribonucleoside triphosphates as substrates. This chain is DNA-directed RNA polymerase subunit alpha, found in Heliobacterium modesticaldum (strain ATCC 51547 / Ice1).